The following is a 562-amino-acid chain: MAILFKEVCDIFYKIESTTKRLEKMEYFIELIKMVENKKAPQDLKKICQIAVGRVFAEHENKELGIGPNILIDAIISTGINKKTIQNTINQTGDIGTALEQLGHNIKQTSLFQTPPTLEEVYTTLKKLSTIEGGQSQKKKIRHISSILIKSSPIEQRYLARLILEDMRIGMSIPTILGAFSKYYNQPKENLEKIYAVVNDIGLLAEKLAQRCDIYNDEELQLKIFRPIKPMLAQLIGSINDAIIEMGAPQFETKYDGARVQIHKKDNIVKIYSRKLEDITNSIPEIVEEVKNIEAQNLIIEGECVAMDKNGRPRPFQDILRRFRRKYNIDSIQSEINLKVYVFDILYYNNKSLIELPLIERRSILEKILTNKHNKLNISHKLTTDNEQKAREFYEWSLSIGHEGVMIKNPNAIYTPGSRVRTMYKFKPTLESLDVVITKAKMGMGKRKEWYGSFEIAVKDYENNLYTIGHVGSGLTEEELHNLTEQIKNITIEVINDEAIVEPKIVLEISYEEIQESDKYKCGYALRFPRVARIRTDKSIEDINSIEDIERIFDIQKGKGNL.

ATP is bound at residue glutamate 252. The N6-AMP-lysine intermediate role is filled by lysine 254. Positions 259, 274, 303, 343, 419, and 425 each coordinate ATP.

Belongs to the ATP-dependent DNA ligase family. Mg(2+) serves as cofactor.

The enzyme catalyses ATP + (deoxyribonucleotide)n-3'-hydroxyl + 5'-phospho-(deoxyribonucleotide)m = (deoxyribonucleotide)n+m + AMP + diphosphate.. Functionally, DNA ligase that seals nicks in double-stranded DNA during DNA replication, DNA recombination and DNA repair. This is DNA ligase from Methanococcus aeolicus (strain ATCC BAA-1280 / DSM 17508 / OCM 812 / Nankai-3).